Consider the following 183-residue polypeptide: Small ribosomal subunit protein uS4c (183 aa).

In terms of domain architecture, S4 RNA-binding spans 82 to 143 (MRLDNILFRL…KQRSKALIQN (62 aa)).

Belongs to the universal ribosomal protein uS4 family. In terms of assembly, part of the 30S ribosomal subunit. Contacts protein S5. The interaction surface between S4 and S5 is involved in control of translational fidelity.

The protein resides in the plastid. It localises to the chloroplast. Functionally, one of the primary rRNA binding proteins, it binds directly to 16S rRNA where it nucleates assembly of the body of the 30S subunit. Its function is as follows. With S5 and S12 plays an important role in translational accuracy. The protein is Small ribosomal subunit protein uS4c (rps4) of Gladiolus communis (Cornflag).